The following is a 102-amino-acid chain: Small ribosomal subunit protein uS10 (102 aa).

It belongs to the universal ribosomal protein uS10 family. In terms of assembly, part of the 30S ribosomal subunit.

Its function is as follows. Involved in the binding of tRNA to the ribosomes. This Listeria innocua serovar 6a (strain ATCC BAA-680 / CLIP 11262) protein is Small ribosomal subunit protein uS10.